We begin with the raw amino-acid sequence, 491 residues long: Probable glycine dehydrogenase (decarboxylating) subunit 2 (491 aa).

Lysine 273 carries the post-translational modification N6-(pyridoxal phosphate)lysine.

It belongs to the GcvP family. C-terminal subunit subfamily. In terms of assembly, the glycine cleavage system is composed of four proteins: P, T, L and H. In this organism, the P 'protein' is a heterodimer of two subunits. The cofactor is pyridoxal 5'-phosphate.

It catalyses the reaction N(6)-[(R)-lipoyl]-L-lysyl-[glycine-cleavage complex H protein] + glycine + H(+) = N(6)-[(R)-S(8)-aminomethyldihydrolipoyl]-L-lysyl-[glycine-cleavage complex H protein] + CO2. The glycine cleavage system catalyzes the degradation of glycine. The P protein binds the alpha-amino group of glycine through its pyridoxal phosphate cofactor; CO(2) is released and the remaining methylamine moiety is then transferred to the lipoamide cofactor of the H protein. The protein is Probable glycine dehydrogenase (decarboxylating) subunit 2 of Bacillus velezensis (strain DSM 23117 / BGSC 10A6 / LMG 26770 / FZB42) (Bacillus amyloliquefaciens subsp. plantarum).